A 283-amino-acid chain; its full sequence is 5'-nucleotidase SurE (283 aa).

A divalent metal cation is bound by residues Asp-14, Asp-15, Ser-47, and Asn-105.

It belongs to the SurE nucleotidase family. The cofactor is a divalent metal cation.

Its subcellular location is the cytoplasm. It catalyses the reaction a ribonucleoside 5'-phosphate + H2O = a ribonucleoside + phosphate. Nucleotidase that shows phosphatase activity on nucleoside 5'-monophosphates. This Chlamydia muridarum (strain MoPn / Nigg) protein is 5'-nucleotidase SurE.